Here is a 501-residue protein sequence, read N- to C-terminus: MSALRRKFGDDYQVVTTSSSGSGLQPQGPGQDPQQQLVPKKKRQRFVDKNGRCNVQHGNLGSETSRYLSDLFTTLVDLKWRWNLFIFILTYTVAWLFMASMWWVIAYTRGDLNKAHVGNYTPCVANVYNFPSAFLFFIETEATIGYGYRYITDKCPEGIILFLFQSILGSIVDAFLIGCMFIKMSQPKKRAETLMFSEHAVISMRDGKLTLMFRVGNLRNSHMVSAQIRCKLLKSRQTPEGEFLPLDQLELDVGFSTGADQLFLVSPLTICHVIDAKSPFYDLSQRSMQTEQFEIVVILEGIVETTGMTCQARTSYTEDEVLWGHRFFPVISLEEGFFKVDYSQFHATFEVPTPPYSVKEQEEMLLMSSPLIAPAITNSKERHNSVECLDGLDDITTKLPSKLQKITGREDFPKKLLRMSSTTSEKAYSLGDLPMKLQRISSVPGNSEEKLVSKTTKMLSDPMSQSVADLPPKLQKMAGGAARMEGNLPAKLRKMNSDRFT.

A disordered region spans residues 1 to 40 (MSALRRKFGDDYQVVTTSSSGSGLQPQGPGQDPQQQLVPK). The Cytoplasmic segment spans residues 1-80 (MSALRRKFGD…LFTTLVDLKW (80 aa)). Residues 18 to 38 (SSSGSGLQPQGPGQDPQQQLV) show a composition bias toward low complexity. Residues 81–105 (RWNLFIFILTYTVAWLFMASMWWVI) traverse the membrane as a helical segment. Residues 106-129 (AYTRGDLNKAHVGNYTPCVANVYN) lie on the Extracellular side of the membrane. Residue asparagine 119 is glycosylated (N-linked (GlcNAc...) asparagine). Positions 130 to 141 (FPSAFLFFIETE) form an intramembrane region, helical; Pore-forming. An intramembrane region (pore-forming) is located at residues 142 to 148 (ATIGYGY). The Selectivity filter motif lies at 143–148 (TIGYGY). The Extracellular segment spans residues 149-157 (RYITDKCPE). The chain crosses the membrane as a helical span at residues 158 to 179 (GIILFLFQSILGSIVDAFLIGC). Residues 180–501 (MFIKMSQPKK…LRKMNSDRFT (322 aa)) are Cytoplasmic-facing. Residues 182–209 (IKMSQPKKRAETLMFSEHAVISMRDGKL) are polyphosphoinositide (PIP2)-binding. A phosphoserine mark is found at serine 385 and serine 424.

It belongs to the inward rectifier-type potassium channel (TC 1.A.2.1) family. KCNJ3 subfamily. As to quaternary structure, associates with KCNJ5/GIRK4 or KCNJ6/GIRK2 to form a G-protein activated heteromultimer pore-forming unit. The resulting inward current is much larger. Associates with KCNJ9/GIRK3 to form a G-protein activated heteromultimer pore-forming unit.

The protein resides in the membrane. It carries out the reaction K(+)(in) = K(+)(out). With respect to regulation, heteromultimer composed of KCNJ3/GIRK1 and KCNJ5/GIRK4 is activated by phosphatidylinositol 4,5 biphosphate (PtdIns(4,5)P2). Inward rectifier potassium channels are characterized by a greater tendency to allow potassium to flow into the cell rather than out of it. Their voltage dependence is regulated by the concentration of extracellular potassium; as external potassium is raised, the voltage range of the channel opening shifts to more positive voltages. The inward rectification is mainly due to the blockage of outward current by internal magnesium. This potassium channel is controlled by G proteins. This receptor plays a crucial role in regulating the heartbeat. The chain is G protein-activated inward rectifier potassium channel 1 (KCNJ3) from Homo sapiens (Human).